Reading from the N-terminus, the 228-residue chain is UPF0173 metal-dependent hydrolase lwe1590 (228 aa).

It belongs to the UPF0173 family.

The protein is UPF0173 metal-dependent hydrolase lwe1590 of Listeria welshimeri serovar 6b (strain ATCC 35897 / DSM 20650 / CCUG 15529 / CIP 8149 / NCTC 11857 / SLCC 5334 / V8).